The sequence spans 395 residues: Bifunctional enzyme IspD/IspF (395 aa).

A 2-C-methyl-D-erythritol 4-phosphate cytidylyltransferase region spans residues 1-237 (MRTWVLLLAA…DANEPQVTVP (237 aa)). The tract at residues 238–395 (CVGWGYDVHR…AAVTGLRPMP (158 aa)) is 2-C-methyl-D-erythritol 2,4-cyclodiphosphate synthase. The a divalent metal cation site is built by Asp244 and His246. 4-CDP-2-C-methyl-D-erythritol 2-phosphate is bound by residues 244 to 246 (DVH) and 270 to 271 (HS). His278 contributes to the a divalent metal cation binding site. 4-CDP-2-C-methyl-D-erythritol 2-phosphate is bound by residues 292–294 (DIG), 297–301 (FPDSD), 368–371 (TTEE), and Phe375.

It in the N-terminal section; belongs to the IspD/TarI cytidylyltransferase family. IspD subfamily. In the C-terminal section; belongs to the IspF family. A divalent metal cation serves as cofactor.

The enzyme catalyses 2-C-methyl-D-erythritol 4-phosphate + CTP + H(+) = 4-CDP-2-C-methyl-D-erythritol + diphosphate. It carries out the reaction 4-CDP-2-C-methyl-D-erythritol 2-phosphate = 2-C-methyl-D-erythritol 2,4-cyclic diphosphate + CMP. It functions in the pathway isoprenoid biosynthesis; isopentenyl diphosphate biosynthesis via DXP pathway; isopentenyl diphosphate from 1-deoxy-D-xylulose 5-phosphate: step 2/6. The protein operates within isoprenoid biosynthesis; isopentenyl diphosphate biosynthesis via DXP pathway; isopentenyl diphosphate from 1-deoxy-D-xylulose 5-phosphate: step 4/6. In terms of biological role, bifunctional enzyme that catalyzes the formation of 4-diphosphocytidyl-2-C-methyl-D-erythritol from CTP and 2-C-methyl-D-erythritol 4-phosphate (MEP) (IspD), and catalyzes the conversion of 4-diphosphocytidyl-2-C-methyl-D-erythritol 2-phosphate (CDP-ME2P) to 2-C-methyl-D-erythritol 2,4-cyclodiphosphate (ME-CPP) with a corresponding release of cytidine 5-monophosphate (CMP) (IspF). The sequence is that of Bifunctional enzyme IspD/IspF from Nitratidesulfovibrio vulgaris (strain ATCC 29579 / DSM 644 / CCUG 34227 / NCIMB 8303 / VKM B-1760 / Hildenborough) (Desulfovibrio vulgaris).